Reading from the N-terminus, the 1330-residue chain is DNA-directed RNA polymerase subunit beta'' (1330 aa).

Zn(2+)-binding residues include Cys-214, Cys-282, Cys-289, and Cys-292.

The protein belongs to the RNA polymerase beta' chain family. RpoC2 subfamily. In terms of assembly, in plastids the minimal PEP RNA polymerase catalytic core is composed of four subunits: alpha, beta, beta', and beta''. When a (nuclear-encoded) sigma factor is associated with the core the holoenzyme is formed, which can initiate transcription. It depends on Zn(2+) as a cofactor.

The protein localises to the plastid. Its subcellular location is the chloroplast. It carries out the reaction RNA(n) + a ribonucleoside 5'-triphosphate = RNA(n+1) + diphosphate. Functionally, DNA-dependent RNA polymerase catalyzes the transcription of DNA into RNA using the four ribonucleoside triphosphates as substrates. This chain is DNA-directed RNA polymerase subunit beta'', found in Physcomitrium patens (Spreading-leaved earth moss).